The chain runs to 265 residues: Orotidine 5'-phosphate decarboxylase (265 aa).

Substrate contacts are provided by residues D38, 60-62 (KTH), 91-100 (DRKFADIGNT), Y213, and R232. K93 serves as the catalytic Proton donor.

It belongs to the OMP decarboxylase family.

The enzyme catalyses orotidine 5'-phosphate + H(+) = UMP + CO2. Its pathway is pyrimidine metabolism; UMP biosynthesis via de novo pathway; UMP from orotate: step 2/2. This is Orotidine 5'-phosphate decarboxylase (pyrG) from Rhizopus oryzae (Mucormycosis agent).